Consider the following 433-residue polypeptide: MGSPEDAGKAPAYRVDHLLSAVESELQAGSEKGDPTERELRVALEDGELWLRFKELTNEMIVTKNGRRMFPVLKVSVSGLDPNAMYSFLLDFVAADGHRWKYVNGEWVPGGKPEPQAPSCVYIHPDSPNFGAHWMKAPVSFSKVKLTNKLNGGGQIMLNSLHKYEPRIHIVRVGGPQRMITSHSFPETQFTAVTAYQNEEITALKIKYNPFAKAFLDAKERNDHKDMMEEAGDNQQSGYSQLGSWLIPGAGALCPPANPHSQFGAPLSLSPAHSCERYSPLRNHRSAPYPNPYTHRNNSPTAYTDNSSACLPMLQSHDNWSSLGVPTHTTMLPMSHSTGTATSSSQYPNLWSVSNSTITPAPQSSGMSNGLSSQFLRGSPVHYTALPHPVTATTSTSPLYDGGAPADLPDSQYDASAHTRLASMWTPITPPSM.

Residues 49–217 (LWLRFKELTN…YNPFAKAFLD (169 aa)) constitute a DNA-binding region (T-box).

As to quaternary structure, monomer. Binds DNA as a monomer.

Its subcellular location is the nucleus. Involved in the transcriptional regulation of genes required for mesoderm formation and differentiation. Binds to a palindromic site (called T site) and activates gene transcription when bound to such a site. The chain is T-box transcription factor T from Gallus gallus (Chicken).